The following is a 1073-amino-acid chain: TSC22 domain family protein 1 (1073 aa).

The required for interaction with TGFBR1 and promotion of TGF-beta signaling stretch occupies residues 1-98; sequence MHQPPESTAA…SQAQLQAQPL (98 aa). Disordered stretches follow at residues 22-110, 125-205, 220-288, 458-486, 607-628, and 742-766; these read MAHP…KKSG, ISSN…PHLP, LHHH…SPAS, VTSE…SVGS, YSQA…QQLQ, and VQQP…QVVP. Residues 36–45 are compositionally biased toward low complexity; that stretch reads GSASALNAAG. Residues 58-70 show a composition bias toward pro residues; it reads FPPPSLLQPPPPA. Residues 84–100 are compositionally biased toward low complexity; it reads SLNLLSQAQLQAQPLAP. Residues 133–142 are compositionally biased toward acidic residues; it reads EDTESYDDLD. Residues 220–240 are compositionally biased toward basic residues; the sequence is LHHHHQIHHGHHLQHGHHHPS. The segment covering 257–271 has biased composition (polar residues); that stretch reads PVSRKLSTTGSSDSI. Position 263 is a phosphoserine (serine 263). Composition is skewed to low complexity over residues 272-288 and 465-483; these read TPVA…SPAS and TSGS…YTES. Over residues 614-625 the composition is skewed to pro residues; sequence VQTPLPGAPPPQ. Over residues 742–764 the composition is skewed to polar residues; that stretch reads VQQPSTQVPPSVIQQGAPPSSQV. Positions 1006–1027 are leucine-zipper; that stretch reads LKEQIKELIEKNSQLEQENNLL. The segment at 1037–1073 is disordered; sequence AQFQAQLQTGSPPATTQPQGTTQPPAQPASQGSGPTA. A compositionally biased stretch (low complexity) spans 1044–1073; it reads QTGSPPATTQPQGTTQPPAQPASQGSGPTA.

This sequence belongs to the TSC-22/Dip/Bun family. Forms homodimers. Forms heterodimers. Component of a complex composed of TSC22D1 (via N-terminus), TGFBR1 and TGFBR2; the interaction between TSC22D1 and TGFBR1 is inhibited by SMAD7 and promoted by TGFB1. Interacts with SMAD7; the interaction requires TGF-beta and the interaction is inhibited by TGFBR1. Interacts with TPT1/fortilin; interaction results in the destabilization of TSC22D1 protein and prevents TSC22D1-mediated apoptosis. Interacts with SMAD4 (via N-terminus). Interacts with ACVRL1/ALK1, ACVR1/ALK2, BMPR1A/ALK3, ACVR1B/ALK4, BMPR1B/ALK6, ACVR2A/ACTRII, and BMPR2. Interacts with SMAD6. Interacts with TFE3; the interaction is enhanced in the presence of TGF-beta. As to quaternary structure, forms a heterodimer with TSC22D4/THG1. In terms of assembly, forms a heterodimer with TSC22D4/THG1. Interacts with histone H1-2. Interacts with GNL3. Interacts with histone H1-2. In terms of tissue distribution, ubiquitously expressed in adult tissues. Expressed in the postmitotic epithelial compartment at the top of intestinal mucosal villi.

The protein resides in the cytoplasm. The protein localises to the nucleus. It localises to the cell membrane. It is found in the mitochondrion. Functionally, transcriptional repressor. Acts on the C-type natriuretic peptide (CNP) promoter. Acts to promote CASP3-mediated apoptosis. Positively regulates TGF-beta signaling by interacting with SMAD7 which inhibits binding of SMAD7 to TGFBR1, preventing recruitment of SMURF ubiquitin ligases to TGFBR1 and inhibiting SMURF-mediated ubiquitination and degradation of TGFBR1. Contributes to enhancement of TGF-beta signaling by binding to and modulating the transcription activator activity of SMAD4. Promotes TGF-beta-induced transcription of COL1A2; via its interaction with TFE3 at E-boxes in the gene proximal promoter. Plays a role in the repression of hematopoietic precursor cell growth. Promotes IL2 deprivation-induced apoptosis in T-lymphocytes, via repression of TSC22D3/GILZ transcription and activation of the caspase cascade. May act to negatively regulate TGFB3 signaling and thereby inhibit cell death in mammary gland cells. Its function is as follows. Positively regulates cell death in response to TGFB3 during mammary gland involution. The protein is TSC22 domain family protein 1 of Homo sapiens (Human).